The sequence spans 66 residues: Large ribosomal subunit protein bL35 (66 aa).

Over residues 1–46 (MPKMKTHRASAKRFKRTANGGLKRHHAFTGHRFHGKTKKQRRHLRK) the composition is skewed to basic residues. The interval 1 to 52 (MPKMKTHRASAKRFKRTANGGLKRHHAFTGHRFHGKTKKQRRHLRKPAMVSR) is disordered.

The protein belongs to the bacterial ribosomal protein bL35 family.

This is Large ribosomal subunit protein bL35 from Lactobacillus acidophilus (strain ATCC 700396 / NCK56 / N2 / NCFM).